Consider the following 284-residue polypeptide: L-ribulose-5-phosphate 3-epimerase UlaE (284 aa).

Belongs to the L-ribulose-5-phosphate 3-epimerase family.

It catalyses the reaction L-ribulose 5-phosphate = L-xylulose 5-phosphate. Its pathway is cofactor degradation; L-ascorbate degradation; D-xylulose 5-phosphate from L-ascorbate: step 3/4. Catalyzes the isomerization of L-xylulose-5-phosphate to L-ribulose-5-phosphate. Is involved in the anaerobic L-ascorbate utilization. This is L-ribulose-5-phosphate 3-epimerase UlaE from Salmonella heidelberg (strain SL476).